Here is a 184-residue protein sequence, read N- to C-terminus: Adenine phosphoribosyltransferase (184 aa).

This sequence belongs to the purine/pyrimidine phosphoribosyltransferase family. As to quaternary structure, homodimer.

The protein localises to the cytoplasm. It catalyses the reaction AMP + diphosphate = 5-phospho-alpha-D-ribose 1-diphosphate + adenine. The protein operates within purine metabolism; AMP biosynthesis via salvage pathway; AMP from adenine: step 1/1. In terms of biological role, catalyzes a salvage reaction resulting in the formation of AMP, that is energically less costly than de novo synthesis. The chain is Adenine phosphoribosyltransferase from Shewanella baltica (strain OS223).